Reading from the N-terminus, the 136-residue chain is Large-conductance mechanosensitive channel (136 aa).

2 helical membrane-spanning segments follow: residues 10–30 (FAMR…AAFG) and 76–96 (GVFI…FMAI).

The protein belongs to the MscL family. Homopentamer.

The protein resides in the cell inner membrane. Channel that opens in response to stretch forces in the membrane lipid bilayer. May participate in the regulation of osmotic pressure changes within the cell. The polypeptide is Large-conductance mechanosensitive channel (Shigella boydii serotype 18 (strain CDC 3083-94 / BS512)).